The chain runs to 144 residues: Large ribosomal subunit protein uL15 (144 aa).

A disordered region spans residues Met1–Gly52. The span at Arg21–Gly31 shows a compositional bias: gly residues. A compositionally biased stretch (basic residues) spans Gly32–Gly44.

The protein belongs to the universal ribosomal protein uL15 family. As to quaternary structure, part of the 50S ribosomal subunit.

Functionally, binds to the 23S rRNA. In Aliivibrio fischeri (strain ATCC 700601 / ES114) (Vibrio fischeri), this protein is Large ribosomal subunit protein uL15.